The chain runs to 445 residues: Glutamyl-tRNA reductase (445 aa).

Substrate contacts are provided by residues 49–52 (TCNR), serine 109, 114–116 (ETQ), and glutamine 120. Cysteine 50 functions as the Nucleophile in the catalytic mechanism. 189–194 (GAGEMS) serves as a coordination point for NADP(+).

The protein belongs to the glutamyl-tRNA reductase family. In terms of assembly, homodimer.

The enzyme catalyses (S)-4-amino-5-oxopentanoate + tRNA(Glu) + NADP(+) = L-glutamyl-tRNA(Glu) + NADPH + H(+). It participates in porphyrin-containing compound metabolism; protoporphyrin-IX biosynthesis; 5-aminolevulinate from L-glutamyl-tRNA(Glu): step 1/2. Functionally, catalyzes the NADPH-dependent reduction of glutamyl-tRNA(Glu) to glutamate 1-semialdehyde (GSA). The chain is Glutamyl-tRNA reductase from Staphylococcus carnosus (strain TM300).